The primary structure comprises 742 residues: G2/M phase-specific E3 ubiquitin-protein ligase (742 aa).

A C2HC pre-PHD-type zinc finger spans residues 10–50 (SPPCVLCGWTDNCPEKYGEKRTYVEYNLTLHNYCLLMSSGI). The PHD-type 1 zinc finger occupies 78-127 (LMCNICRKKGASIGCVAPKCKRSYHFPCGLQKECVFQFMEDFRSYCWEHK). The PHD-type 2; degenerate zinc-finger motif lies at 142–192 (QCTICLDLVEHLPLYSVLRSPCCKNTWFHRECLQYQALSAGIFFFRCAVCN). A PHD-type 3 zinc finger spans residues 236-285 (RCLCKNGRDYNKPDSKWEIKRCQSCGSRGTHLACSSIKSWEQNWECVECR). One can recognise an HECT domain in the interval 417 to 742 (KGFRQRNFRP…IRSTLRGERE (326 aa)).

Its subcellular location is the nucleus. The protein localises to the nucleolus. The protein resides in the cytoplasm. It carries out the reaction S-ubiquitinyl-[E2 ubiquitin-conjugating enzyme]-L-cysteine + [acceptor protein]-L-lysine = [E2 ubiquitin-conjugating enzyme]-L-cysteine + N(6)-ubiquitinyl-[acceptor protein]-L-lysine.. The protein operates within protein modification; protein ubiquitination. E3 ubiquitin-protein ligase which accepts ubiquitin from an E2 ubiquitin-conjugating enzyme in the form of a thioester and then directly transfers the ubiquitin to targeted substrates. Essential in early embryonic development to prevent apoptotic death. The chain is G2/M phase-specific E3 ubiquitin-protein ligase (G2E3) from Gallus gallus (Chicken).